Here is a 920-residue protein sequence, read N- to C-terminus: KIN14B-interacting protein At4g14310 (920 aa).

Residues 1-10 show a composition bias toward basic residues; sequence MSASTNRRRL. 2 disordered regions span residues 1–199 and 309–375; these read MSAS…EKST and IDGP…EKPS. Positions 35 to 54 are enriched in polar residues; the sequence is PISSKNSNPALQKSLSSKEN. Residues 90 to 105 show a composition bias toward low complexity; sequence TRSTSSGLRGRSSSPS. Basic and acidic residues predominate over residues 112–135; sequence SDLRKRNESRVIGEKGESGQDKKS. Composition is skewed to polar residues over residues 137-147 and 166-184; these read LKSSGFKQGTS and CPVN…NSIS. Positions 327–337 are enriched in basic and acidic residues; that stretch reads LNKEELEDRLL. The span at 345 to 355 shows a compositional bias: polar residues; sequence SRTQSKTSSHV. The segment covering 357–374 has biased composition (basic and acidic residues); it reads KGHDSVESNKAVNAEEKP. The stretch at 435–463 forms a coiled coil; sequence TEILRANEALEEIDDEENREEMELEEIDD.

Interacts with KIN14B, CDKA-1, CKS1 and CKS2.

The protein resides in the cytoplasm. In terms of biological role, might be involved in division plane determination. The polypeptide is KIN14B-interacting protein At4g14310 (Arabidopsis thaliana (Mouse-ear cress)).